We begin with the raw amino-acid sequence, 160 residues long: Transcription antitermination protein NusB (160 aa).

It belongs to the NusB family.

In terms of biological role, involved in transcription antitermination. Required for transcription of ribosomal RNA (rRNA) genes. Binds specifically to the boxA antiterminator sequence of the ribosomal RNA (rrn) operons. The polypeptide is Transcription antitermination protein NusB (Rhizobium etli (strain CIAT 652)).